We begin with the raw amino-acid sequence, 57 residues long: Catalase-1 (57 aa).

Tyrosine 37 provides a ligand contact to heme.

In terms of assembly, homodimer. The cofactor is heme.

The catalysed reaction is 2 H2O2 = O2 + 2 H2O. Functionally, decomposes hydrogen peroxide into water and oxygen; serves to protect cells from the toxic effects of hydrogen peroxide. The polypeptide is Catalase-1 (Comamonas terrigena).